A 70-amino-acid polypeptide reads, in one-letter code: Gas vesicle protein A (70 aa).

Belongs to the gas vesicle GvpA family. The gas vesicle shell is 2 nm thick and consists of a single layer of this protein. It forms helical ribs nearly perpendicular to the long axis of the vesicle.

It localises to the gas vesicle shell. Gas vesicles are hollow, gas filled proteinaceous nanostructures found in some microorganisms. During planktonic growth they allow positioning of the organism at a favorable depth for light or nutrient acquisition. GvpA forms the protein shell. The protein is Gas vesicle protein A of Bradyrhizobium sp. (strain ORS 278).